Reading from the N-terminus, the 124-residue chain is NAD(P)H-quinone oxidoreductase subunit 5, chloroplastic (124 aa).

The next 3 helical transmembrane spans lie at 22 to 42 (TPIS…FLVA), 44 to 64 (LLPL…IGII), and 91 to 111 (LGYM…FHLI).

The protein belongs to the complex I subunit 5 family. NDH is composed of at least 16 different subunits, 5 of which are encoded in the nucleus.

It is found in the plastid. The protein resides in the chloroplast thylakoid membrane. The enzyme catalyses a plastoquinone + NADH + (n+1) H(+)(in) = a plastoquinol + NAD(+) + n H(+)(out). It carries out the reaction a plastoquinone + NADPH + (n+1) H(+)(in) = a plastoquinol + NADP(+) + n H(+)(out). NDH shuttles electrons from NAD(P)H:plastoquinone, via FMN and iron-sulfur (Fe-S) centers, to quinones in the photosynthetic chain and possibly in a chloroplast respiratory chain. The immediate electron acceptor for the enzyme in this species is believed to be plastoquinone. Couples the redox reaction to proton translocation, and thus conserves the redox energy in a proton gradient. This Pisum sativum (Garden pea) protein is NAD(P)H-quinone oxidoreductase subunit 5, chloroplastic (ndhF).